Reading from the N-terminus, the 430-residue chain is UPF0597 protein CV_1824 (430 aa).

It belongs to the UPF0597 family.

The sequence is that of UPF0597 protein CV_1824 from Chromobacterium violaceum (strain ATCC 12472 / DSM 30191 / JCM 1249 / CCUG 213 / NBRC 12614 / NCIMB 9131 / NCTC 9757 / MK).